Reading from the N-terminus, the 423-residue chain is Adenylosuccinate synthetase (423 aa).

Residues 12–18 (GDEGKGK) and 40–42 (GHT) each bind GTP. D13 functions as the Proton acceptor in the catalytic mechanism. Positions 13 and 40 each coordinate Mg(2+). IMP-binding positions include 13 to 16 (DEGK), 38 to 41 (NAGH), T129, R143, Q221, T236, and R300. The active-site Proton donor is the H41. 296 to 302 (SVTGRKR) provides a ligand contact to substrate. Residues R302, 328-330 (KSD), and 408-410 (SVG) contribute to the GTP site.

Belongs to the adenylosuccinate synthetase family. As to quaternary structure, homodimer. Requires Mg(2+) as cofactor.

It localises to the cytoplasm. The catalysed reaction is IMP + L-aspartate + GTP = N(6)-(1,2-dicarboxyethyl)-AMP + GDP + phosphate + 2 H(+). It participates in purine metabolism; AMP biosynthesis via de novo pathway; AMP from IMP: step 1/2. Its function is as follows. Plays an important role in the de novo pathway of purine nucleotide biosynthesis. Catalyzes the first committed step in the biosynthesis of AMP from IMP. The chain is Adenylosuccinate synthetase from Bacteroides fragilis (strain ATCC 25285 / DSM 2151 / CCUG 4856 / JCM 11019 / LMG 10263 / NCTC 9343 / Onslow / VPI 2553 / EN-2).